Reading from the N-terminus, the 1399-residue chain is DNA-directed RNA polymerase subunit beta' (1399 aa).

Residues cysteine 71, cysteine 73, cysteine 86, and cysteine 89 each contribute to the Zn(2+) site. Aspartate 462, aspartate 464, and aspartate 466 together coordinate Mg(2+). Zn(2+)-binding residues include cysteine 810, cysteine 884, cysteine 891, and cysteine 894.

Belongs to the RNA polymerase beta' chain family. In terms of assembly, the RNAP catalytic core consists of 2 alpha, 1 beta, 1 beta' and 1 omega subunit. When a sigma factor is associated with the core the holoenzyme is formed, which can initiate transcription. Mg(2+) serves as cofactor. It depends on Zn(2+) as a cofactor.

It catalyses the reaction RNA(n) + a ribonucleoside 5'-triphosphate = RNA(n+1) + diphosphate. Functionally, DNA-dependent RNA polymerase catalyzes the transcription of DNA into RNA using the four ribonucleoside triphosphates as substrates. This is DNA-directed RNA polymerase subunit beta' from Nitrobacter winogradskyi (strain ATCC 25391 / DSM 10237 / CIP 104748 / NCIMB 11846 / Nb-255).